The chain runs to 116 residues: Small ribosomal subunit protein bS16 (116 aa).

The protein belongs to the bacterial ribosomal protein bS16 family.

This is Small ribosomal subunit protein bS16 from Chlamydia muridarum (strain MoPn / Nigg).